The primary structure comprises 663 residues: Subtilisin-like serine protease (663 aa).

An N-terminal signal peptide occupies residues 1–23 (MKKFGAVVLALFLVGLMAGSVLA). Residues 24-136 (APQKPAVRNV…IQEDYVVKVA (113 aa)) constitute a propeptide, removed in mature form. The Peptidase S8 domain occupies 139 to 439 (TEGLDESAAQ…AGRVNAYKAA (301 aa)). Catalysis depends on charge relay system residues Asp170, His203, and Ser382. Ca(2+)-binding residues include Pro420, Ile423, Asp483, Leu484, Asp485, Asp497, Tyr498, Thr501, and Glu507. Positions 537–565 (VSDGSLGQPSGGGSEPSPSPSPEPTVDEK) are disordered. The propeptide at 563-663 (DEKTFTGTVH…YQLDAKVYYG (101 aa)) is removed in mature form.

It belongs to the peptidase S8 family. Monomer.

The catalysed reaction is Hydrolysis of proteins with broad specificity for peptide bonds, and a preference for a large uncharged residue in P1. Hydrolyzes peptide amides.. Its activity is regulated as follows. Resistant to treatment with 5% SDS, 8 M urea, 10% Triton X-100 or 10% Tween-20. Fully active although less stable in the presence of 10 mM EDTA. Activity not affected by the absence or presence of 10 mM CaCl(2). Unstable in the presence of 2 M or over GdnHCl and loses 35% and 99% of its activity upon incubation with 2 and 4 M GdnHCl, respectively, for 1 hour at 55 degrees Celsius. Nearly fully loses activity upon incubation at pH 2.0. Its function is as follows. Serine protease with a broad substrate specificity. This chain is Subtilisin-like serine protease, found in Thermococcus kodakarensis (strain ATCC BAA-918 / JCM 12380 / KOD1) (Pyrococcus kodakaraensis (strain KOD1)).